Here is a 336-residue protein sequence, read N- to C-terminus: Dihydroorotate dehydrogenase (quinone) (336 aa).

Residues 62–66 and Thr-86 contribute to the FMN site; that span reads AGLEK. Lys-66 is a binding site for substrate. Residue 111–115 participates in substrate binding; the sequence is NRMGF. FMN contacts are provided by Asn-139 and Asn-172. Asn-172 contributes to the substrate binding site. The active-site Nucleophile is Ser-175. A substrate-binding site is contributed by Asn-177. FMN is bound by residues Lys-217 and Thr-245. 246–247 provides a ligand contact to substrate; that stretch reads NT. Residues Gly-268, Gly-297, and 318–319 contribute to the FMN site; that span reads YS.

The protein belongs to the dihydroorotate dehydrogenase family. Type 2 subfamily. In terms of assembly, monomer. FMN serves as cofactor.

Its subcellular location is the cell membrane. It carries out the reaction (S)-dihydroorotate + a quinone = orotate + a quinol. It functions in the pathway pyrimidine metabolism; UMP biosynthesis via de novo pathway; orotate from (S)-dihydroorotate (quinone route): step 1/1. Its function is as follows. Catalyzes the conversion of dihydroorotate to orotate with quinone as electron acceptor. The protein is Dihydroorotate dehydrogenase (quinone) of Aliivibrio salmonicida (strain LFI1238) (Vibrio salmonicida (strain LFI1238)).